A 478-amino-acid chain; its full sequence is Membrane-bound lytic murein transglycosylase F (478 aa).

The signal sequence occupies residues 1 to 22; it reads MTRFLFAIILGFLLTACQQVTV. Residues 23–257 form a non-LT domain region; it reads EETEYVPHKL…HLNEKYFGHV (235 aa). The segment at 258–478 is LT domain; sequence KRFDYIDTRA…PGTLSPDKPK (221 aa). Glu-302 is an active-site residue. Positions 446–478 are disordered; it reads SKQQNSDEEEPSDLASEDGPAPVPGTLSPDKPK. Residues 451–461 show a composition bias toward acidic residues; it reads SDEEEPSDLAS.

It in the N-terminal section; belongs to the bacterial solute-binding protein 3 family. In the C-terminal section; belongs to the transglycosylase Slt family.

The protein resides in the cell outer membrane. It catalyses the reaction Exolytic cleavage of the (1-&gt;4)-beta-glycosidic linkage between N-acetylmuramic acid (MurNAc) and N-acetylglucosamine (GlcNAc) residues in peptidoglycan, from either the reducing or the non-reducing ends of the peptidoglycan chains, with concomitant formation of a 1,6-anhydrobond in the MurNAc residue.. Its function is as follows. Murein-degrading enzyme that degrades murein glycan strands and insoluble, high-molecular weight murein sacculi, with the concomitant formation of a 1,6-anhydromuramoyl product. Lytic transglycosylases (LTs) play an integral role in the metabolism of the peptidoglycan (PG) sacculus. Their lytic action creates space within the PG sacculus to allow for its expansion as well as for the insertion of various structures such as secretion systems and flagella. The polypeptide is Membrane-bound lytic murein transglycosylase F (Shewanella sp. (strain MR-4)).